The primary structure comprises 150 residues: uncharacterized protein (150 aa).

The signal sequence occupies residues 1–21; that stretch reads MAMEMAMMGLLGTVVGASAMG.

This is an uncharacterized protein from Mycobacterium tuberculosis (strain CDC 1551 / Oshkosh).